We begin with the raw amino-acid sequence, 352 residues long: MTEQTIAHKQKQLTKQVAAFAQPETKNSLIQLLNTFIPFFGLWFLAYLSLDVSYLLTLALTVIAAGFLTRIFIIFHDCCHQSFFKQKRYNHILGFLTGVLTLFPYLQWQHSHSIHHATSSNLDKRGTGDIWMLTVNEYKAASRRTKLAYRLYRNPFIMFILGPIYVFLITNRFNKKGARRKERVNTYLTNLAIVALAAACCLIFGWQSFLLVQGPIFLISGSIGVWLFYVQHTFEDSYFEADENWSYVQAAVEGSSFYKLPKLLQWLTGNIGYHHVHHLSPKVPNYKLEVAHEHHEPLKNVPTITLKTSLQSLAFRLWDEDNKQFVSFRAIKHIPVSLPPDSPEKQKLRKNA.

2 helical membrane passes run 28–48 (SLIQ…LAYL) and 55–75 (LLTL…FIIF). A Histidine box-1 motif is present at residues 76–80 (HDCCH). The helical transmembrane segment at 89-109 (YNHILGFLTGVLTLFPYLQWQ) threads the bilayer. Positions 112 to 116 (HSIHH) match the Histidine box-2 motif. The next 3 membrane-spanning stretches (helical) occupy residues 151 to 171 (LYRN…LITN), 186 to 206 (TYLT…IFGW), and 209 to 229 (FLLV…WLFY). A Histidine box-3 motif is present at residues 274-278 (HHVHH).

Belongs to the fatty acid desaturase type 1 family.

It localises to the cell membrane. The protein operates within lipid metabolism; fatty acid metabolism. Catalyzes the introduction of a cis-double bond at the delta(5) position of existing saturated fatty acids attached to membrane phospholipids. It is not strictly specific for palmitic acid (C16) but can also accept C14 as well as C18 species to yield unsaturated fatty acids. The chain is Fatty acid desaturase (des) from Bacillus subtilis (strain 168).